The primary structure comprises 1150 residues: GPI inositol-deacylase (1150 aa).

The disordered stretch occupies residues 1-43 (MQGRPNGASGDPNPRNDTSVTIDSDSDNGSRHRIAEVRGSSPS). N-linked (GlcNAc...) asparagine glycosylation is found at asparagine 16 and asparagine 28. Residues 122–142 (ICSGLVLFVTVSALLILSIIV) form a helical membrane-spanning segment. The active site involves serine 309. The helical transmembrane segment at 790–810 (LAMRYRTVFAAFPLLVVSLVL) threads the bilayer. Asparagine 818 carries N-linked (GlcNAc...) asparagine glycosylation. The chain crosses the membrane as a helical span at residues 829–849 (ALDLCIRSSIPLLFLGLTFLA). N-linked (GlcNAc...) asparagine glycosylation is present at asparagine 870. Residues 890–910 (AFFWFLVPLFGIISIGTCVIV) traverse the membrane as a helical segment. Asparagine 942 carries an N-linked (GlcNAc...) asparagine glycan. A run of 5 helical transmembrane segments spans residues 960-980 (VLLL…VACV), 1010-1030 (SIFI…IVWI), 1047-1067 (VFSI…TMIP), 1079-1099 (VLFF…AYLL), and 1102-1122 (ITNL…GFSL). Residues asparagine 1124 and asparagine 1130 are each glycosylated (N-linked (GlcNAc...) asparagine).

Belongs to the GPI inositol-deacylase family.

It localises to the endoplasmic reticulum membrane. In terms of biological role, involved in inositol deacylation of GPI-anchored proteins which plays important roles in the quality control and ER-associated degradation of GPI-anchored proteins. The protein is GPI inositol-deacylase (BST1) of Coccidioides immitis (strain RS) (Valley fever fungus).